Reading from the N-terminus, the 513-residue chain is Maturase K (513 aa).

The protein belongs to the intron maturase 2 family. MatK subfamily.

It localises to the plastid. The protein localises to the chloroplast. Its function is as follows. Usually encoded in the trnK tRNA gene intron. Probably assists in splicing its own and other chloroplast group II introns. The chain is Maturase K from Phaseolus vulgaris (Kidney bean).